The primary structure comprises 91 residues: MKQLLASPSLQLVTYPASATAQSAEFASADCVTGLNEIGQISVSNISGDPQDVERIVALKADEQGASWYRIITMYEDQQPDNWRVQAILYA.

The first 21 residues, 1–21 (MKQLLASPSLQLVTYPASATA), serve as a signal peptide directing secretion.

Belongs to the BhsA/McbA family.

The protein localises to the periplasm. This is an uncharacterized protein from Escherichia coli O157:H7.